The chain runs to 344 residues: Peroxidase 36 (344 aa).

An N-terminal signal peptide occupies residues Met1–Cys28. Intrachain disulfides connect Cys50-Cys130, Cys83-Cys88, Cys136-Cys337, and Cys215-Cys247. His81 serves as the catalytic Proton acceptor. Asp82, Val85, Gly87, Asp89, and Ser91 together coordinate Ca(2+). Residue Pro178 participates in substrate binding. His208 provides a ligand contact to heme b. Residue Thr209 coordinates Ca(2+). A glycan (N-linked (GlcNAc...) asparagine) is linked at Asn224. Ca(2+) is bound by residues Asp260, Thr263, and Asp268.

The protein belongs to the peroxidase family. Classical plant (class III) peroxidase subfamily. Heme b serves as cofactor. It depends on Ca(2+) as a cofactor.

Its subcellular location is the secreted. The enzyme catalyses 2 a phenolic donor + H2O2 = 2 a phenolic radical donor + 2 H2O. Removal of H(2)O(2), oxidation of toxic reductants, biosynthesis and degradation of lignin, suberization, auxin catabolism, response to environmental stresses such as wounding, pathogen attack and oxidative stress. These functions might be dependent on each isozyme/isoform in each plant tissue. This is Peroxidase 36 (PER36) from Arabidopsis thaliana (Mouse-ear cress).